We begin with the raw amino-acid sequence, 262 residues long: 2-keto-4-pentenoate hydratase (262 aa).

This sequence belongs to the hydratase/decarboxylase family. MhpD subfamily. It depends on a divalent metal cation as a cofactor.

The enzyme catalyses (S)-4-hydroxy-2-oxopentanoate = (2Z)-2-hydroxypenta-2,4-dienoate + H2O. It participates in aromatic compound metabolism; 3-phenylpropanoate degradation. Functionally, catalyzes the conversion of 2-hydroxypentadienoic acid (enolic form of 2-oxopent-4-enoate) to 4-hydroxy-2-ketopentanoic acid. In Burkholderia vietnamiensis (strain G4 / LMG 22486) (Burkholderia cepacia (strain R1808)), this protein is 2-keto-4-pentenoate hydratase.